We begin with the raw amino-acid sequence, 462 residues long: Cysteine--tRNA ligase (462 aa).

Zn(2+) is bound at residue Cys27. The 'HIGH' region motif lies at 29–39 (PTVYNYIHVGN). Positions 209, 234, and 238 each coordinate Zn(2+). A 'KMSKS' region motif is present at residues 266-270 (KMSKS). Lys269 contributes to the ATP binding site.

The protein belongs to the class-I aminoacyl-tRNA synthetase family. Monomer. Requires Zn(2+) as cofactor.

It is found in the cytoplasm. The enzyme catalyses tRNA(Cys) + L-cysteine + ATP = L-cysteinyl-tRNA(Cys) + AMP + diphosphate. This chain is Cysteine--tRNA ligase, found in Finegoldia magna (strain ATCC 29328 / DSM 20472 / WAL 2508) (Peptostreptococcus magnus).